Here is a 327-residue protein sequence, read N- to C-terminus: tRNA U34 carboxymethyltransferase (327 aa).

Carboxy-S-adenosyl-L-methionine-binding positions include K91, W105, K110, G130, 181 to 182 (IE), M196, Y200, and R315.

This sequence belongs to the class I-like SAM-binding methyltransferase superfamily. CmoB family. As to quaternary structure, homotetramer.

The enzyme catalyses carboxy-S-adenosyl-L-methionine + 5-hydroxyuridine(34) in tRNA = 5-carboxymethoxyuridine(34) in tRNA + S-adenosyl-L-homocysteine + H(+). Catalyzes carboxymethyl transfer from carboxy-S-adenosyl-L-methionine (Cx-SAM) to 5-hydroxyuridine (ho5U) to form 5-carboxymethoxyuridine (cmo5U) at position 34 in tRNAs. The protein is tRNA U34 carboxymethyltransferase of Pectobacterium atrosepticum (strain SCRI 1043 / ATCC BAA-672) (Erwinia carotovora subsp. atroseptica).